Here is a 94-residue protein sequence, read N- to C-terminus: Translation initiation factor 1A 2 (94 aa).

The 75-residue stretch at 6–80 (GRRNLRMPND…EKANVEWRYS (75 aa)) folds into the S1-like domain.

Belongs to the eIF-1A family.

Seems to be required for maximal rate of protein biosynthesis. Enhances ribosome dissociation into subunits and stabilizes the binding of the initiator Met-tRNA(I) to 40 S ribosomal subunits. In Halobacterium salinarum (strain ATCC 700922 / JCM 11081 / NRC-1) (Halobacterium halobium), this protein is Translation initiation factor 1A 2 (eIF1A2).